Reading from the N-terminus, the 386-residue chain is S-adenosylmethionine synthase (386 aa).

His-14 is an ATP binding site. A Mg(2+)-binding site is contributed by Asp-16. Glu-42 lines the K(+) pocket. The L-methionine site is built by Glu-55 and Gln-98. A flexible loop region spans residues 98–108 (QSGDISQGVDG). ATP contacts are provided by residues 162–164 (DSK), 230–231 (RF), Asp-239, 245–246 (RK), Ala-262, and Lys-266. Asp-239 contacts L-methionine. An L-methionine-binding site is contributed by Lys-270.

It belongs to the AdoMet synthase family. In terms of assembly, homotetramer; dimer of dimers. The cofactor is Mg(2+). Requires K(+) as cofactor.

It is found in the cytoplasm. The catalysed reaction is L-methionine + ATP + H2O = S-adenosyl-L-methionine + phosphate + diphosphate. Its pathway is amino-acid biosynthesis; S-adenosyl-L-methionine biosynthesis; S-adenosyl-L-methionine from L-methionine: step 1/1. Its function is as follows. Catalyzes the formation of S-adenosylmethionine (AdoMet) from methionine and ATP. The overall synthetic reaction is composed of two sequential steps, AdoMet formation and the subsequent tripolyphosphate hydrolysis which occurs prior to release of AdoMet from the enzyme. The sequence is that of S-adenosylmethionine synthase from Salinibacter ruber (strain DSM 13855 / M31).